The primary structure comprises 395 residues: Ribosomal RNA large subunit methyltransferase G (395 aa).

This sequence belongs to the methyltransferase superfamily. RlmG family.

Its subcellular location is the cytoplasm. It carries out the reaction guanosine(1835) in 23S rRNA + S-adenosyl-L-methionine = N(2)-methylguanosine(1835) in 23S rRNA + S-adenosyl-L-homocysteine + H(+). Specifically methylates the guanine in position 1835 (m2G1835) of 23S rRNA. This Yersinia pestis (strain Pestoides F) protein is Ribosomal RNA large subunit methyltransferase G.